A 180-amino-acid polypeptide reads, in one-letter code: Oligoribonuclease (180 aa).

The Exonuclease domain maps to 7–170 (LIWIDLEMTG…DDIRESIAEL (164 aa)). Tyrosine 128 is an active-site residue.

This sequence belongs to the oligoribonuclease family.

The protein resides in the cytoplasm. In terms of biological role, 3'-to-5' exoribonuclease specific for small oligoribonucleotides. This Pseudomonas aeruginosa (strain UCBPP-PA14) protein is Oligoribonuclease.